The primary structure comprises 400 residues: Nicotinate phosphoribosyltransferase (400 aa).

At histidine 220 the chain carries Phosphohistidine; by autocatalysis.

The protein belongs to the NAPRTase family. Transiently phosphorylated on a His residue during the reaction cycle. Phosphorylation strongly increases the affinity for substrates and increases the rate of nicotinate D-ribonucleotide production. Dephosphorylation regenerates the low-affinity form of the enzyme, leading to product release.

The enzyme catalyses nicotinate + 5-phospho-alpha-D-ribose 1-diphosphate + ATP + H2O = nicotinate beta-D-ribonucleotide + ADP + phosphate + diphosphate. It participates in cofactor biosynthesis; NAD(+) biosynthesis; nicotinate D-ribonucleotide from nicotinate: step 1/1. Its function is as follows. Catalyzes the synthesis of beta-nicotinate D-ribonucleotide from nicotinate and 5-phospho-D-ribose 1-phosphate at the expense of ATP. The protein is Nicotinate phosphoribosyltransferase of Enterobacter sp. (strain 638).